Reading from the N-terminus, the 446-residue chain is tRNA-2-methylthio-N(6)-dimethylallyladenosine synthase (446 aa).

The MTTase N-terminal domain occupies 3–120; it reads KKLFIETHGC…LPEMIDAARS (118 aa). Residues Cys12, Cys49, Cys83, Cys157, Cys161, and Cys164 each coordinate [4Fe-4S] cluster. A Radical SAM core domain is found at 143–375; it reads RVDGPTAFVS…QSRIHQQGYE (233 aa). A TRAM domain is found at 378 to 442; it reads RRMVGSTQRI…PHSLRGTLID (65 aa).

The protein belongs to the methylthiotransferase family. MiaB subfamily. Monomer. It depends on [4Fe-4S] cluster as a cofactor.

It localises to the cytoplasm. The enzyme catalyses N(6)-dimethylallyladenosine(37) in tRNA + (sulfur carrier)-SH + AH2 + 2 S-adenosyl-L-methionine = 2-methylsulfanyl-N(6)-dimethylallyladenosine(37) in tRNA + (sulfur carrier)-H + 5'-deoxyadenosine + L-methionine + A + S-adenosyl-L-homocysteine + 2 H(+). Its function is as follows. Catalyzes the methylthiolation of N6-(dimethylallyl)adenosine (i(6)A), leading to the formation of 2-methylthio-N6-(dimethylallyl)adenosine (ms(2)i(6)A) at position 37 in tRNAs that read codons beginning with uridine. In Pseudomonas aeruginosa (strain UCBPP-PA14), this protein is tRNA-2-methylthio-N(6)-dimethylallyladenosine synthase.